The primary structure comprises 488 residues: Long chain base biosynthesis protein 2a (488 aa).

A helical membrane pass occupies residues 4-24 (LPYTTALTTLFSYGLLFAFGQ). Position 311 is an N6-(pyridoxal phosphate)lysine (Lys-311).

The protein belongs to the class-II pyridoxal-phosphate-dependent aminotransferase family. As to quaternary structure, heterodimer with LCB1. Component of the serine palmitoyltransferase (SPT) complex, composed of LCB1 and LCB2. It depends on pyridoxal 5'-phosphate as a cofactor.

The protein resides in the endoplasmic reticulum membrane. It carries out the reaction L-serine + hexadecanoyl-CoA + H(+) = 3-oxosphinganine + CO2 + CoA. It functions in the pathway lipid metabolism; sphingolipid metabolism. Serine palmitoyltransferase (SPT). The heterodimer formed with LCB1 constitutes the catalytic core. The sequence is that of Long chain base biosynthesis protein 2a from Oryza sativa subsp. japonica (Rice).